Here is a 92-residue protein sequence, read N- to C-terminus: Calitoxin (92 aa).

The N-terminal stretch at Met-1–Ser-20 is a signal peptide. A propeptide spanning residues Arg-21 to Ala-42 is cleaved from the precursor. Disulfide bonds link Cys-47–Cys-86, Cys-49–Cys-77, and Cys-67–Cys-87.

The protein belongs to the sea anemone sodium channel inhibitory toxin family. In terms of tissue distribution, expressed both outside and in acontia, a specialised envenomation structure laden with batteries of venom-containing nematocysts found only in the superfamily Metridioidea.

The protein resides in the secreted. It is found in the nematocyst. In terms of biological role, in neuromuscular preparation of crustaceans, the toxin increased neurotransmitter release, causing repetitive firing of the axons. May affect sodium channels (Nav). The sequence is that of Calitoxin from Calliactis polypus (Hermit crab anemone).